The sequence spans 133 residues: Small ribosomal subunit protein uS8 (133 aa).

This sequence belongs to the universal ribosomal protein uS8 family. As to quaternary structure, part of the 30S ribosomal subunit. Contacts proteins S5 and S12.

One of the primary rRNA binding proteins, it binds directly to 16S rRNA central domain where it helps coordinate assembly of the platform of the 30S subunit. This chain is Small ribosomal subunit protein uS8, found in Chlamydia caviae (strain ATCC VR-813 / DSM 19441 / 03DC25 / GPIC) (Chlamydophila caviae).